A 1132-amino-acid polypeptide reads, in one-letter code: Phospholipid-transporting ATPase IG (1132 aa).

The Cytoplasmic segment spans residues 1–66 (MQMVPSLPPA…NFLPKNLFEQ (66 aa)). The helical transmembrane segment at 67 to 85 (FRRIANFYFLIIFLVQVTV) threads the bilayer. Asp86 is a topological domain (extracellular). Residues 87–107 (TPTSPVTSGLPLFFVITVTAI) form a helical membrane-spanning segment. The Cytoplasmic portion of the chain corresponds to 108-290 (KQGYEDCLRH…SQKRSAVEKS (183 aa)). The helical transmembrane segment at 291–311 (INAFLIVYLFILLTKAAVCTT) threads the bilayer. The Extracellular portion of the chain corresponds to 312–346 (LKYVWQSTPYNDEPWYNQKTQKERETLKVLKMFTD). The chain crosses the membrane as a helical span at residues 347-367 (FLSFMVLFNFIIPVSMYVTVE). Residues 368-879 (MQKFLGSFFI…YVRIAHLVQY (512 aa)) are Cytoplasmic-facing. Asp412 acts as the 4-aspartylphosphate intermediate in catalysis. Asp412, Lys413, and Thr414 together coordinate ATP. Residue Asp412 participates in Mg(2+) binding. Thr414 is a binding site for Mg(2+). Residue Ser445 is modified to Phosphoserine. 9 residues coordinate ATP: Glu501, Phe543, Lys566, Arg597, Thr677, Gly678, Asp679, Arg792, and Lys798. Asp819 lines the Mg(2+) pocket. Residues Asn822 and Asp823 each contribute to the ATP site. A Mg(2+)-binding site is contributed by Asp823. A helical transmembrane segment spans residues 880–900 (FFYKNLCFILPQFLYQFFCGF). The Extracellular portion of the chain corresponds to 901–908 (SQQPLYDA). A helical membrane pass occupies residues 909-929 (AYLTMYNICFTSLPILAYSLL). Topologically, residues 930–955 (EQHINIDTLTSDPRLYMKISGNAMLQ) are cytoplasmic. The chain crosses the membrane as a helical span at residues 956–976 (LGPFLYWTFLAAFEGTVFFFG). Residues 977–995 (TYFLFQTASLEENGKVYGN) lie on the Extracellular side of the membrane. The helical transmembrane segment at 996 to 1016 (WTFGTIVFTVLVFTVTLKLAL) threads the bilayer. Over 1017–1026 (DTRFWTWINH) the chain is Cytoplasmic. The helical transmembrane segment at 1027-1047 (FVIWGSLAFYVFFSFFWGGII) threads the bilayer. Topologically, residues 1048 to 1069 (WPFLKQQRMYFVFAQMLSSVST) are extracellular. Residues 1070-1090 (WLAIILLIFISLFPEILLIVL) traverse the membrane as a helical segment. The Cytoplasmic portion of the chain corresponds to 1091–1132 (KNVRRRSARRNLSCRRASDSLSARPSVRPLLLRTFSDESNVL). Ser1108, Ser1116, and Ser1126 each carry phosphoserine. Positions 1116-1121 (SVRPLL) match the Di-leucine motif motif.

This sequence belongs to the cation transport ATPase (P-type) (TC 3.A.3) family. Type IV subfamily. In terms of assembly, component of a P4-ATPase flippase complex which consists of a catalytic alpha subunit ATP11C and an accessory beta subunit TMEM30A. Mg(2+) serves as cofactor. Post-translationally, proteolytically cleaved by CASP3, CASP6 and CASP7. Phosphorylated at Ser-1116 likely by PRKCA; this creates a functional di-leucine motif that is sufficient for endocytosis. As to expression, widely expressed.

The protein localises to the cell membrane. It localises to the endoplasmic reticulum membrane. It is found in the early endosome membrane. The protein resides in the recycling endosome membrane. It catalyses the reaction ATP + H2O + phospholipidSide 1 = ADP + phosphate + phospholipidSide 2.. It carries out the reaction a 1,2-diacyl-sn-glycero-3-phospho-L-serine(out) + ATP + H2O = a 1,2-diacyl-sn-glycero-3-phospho-L-serine(in) + ADP + phosphate + H(+). The catalysed reaction is a 1,2-diacyl-sn-glycero-3-phosphoethanolamine(out) + ATP + H2O = a 1,2-diacyl-sn-glycero-3-phosphoethanolamine(in) + ADP + phosphate + H(+). Its activity is regulated as follows. The flippase activity is inactivated by caspase-mediated cleavage in apoptotic cells, allowing for PS exposure on the cell surface and engulfment of apoptotic cells by macrophages. The ATPase activity is up-regulated by aminophospholipids PS and PE and down-regulated by Increasing intracellular Ca2+ levels. Functionally, catalytic component of a P4-ATPase flippase complex which catalyzes the hydrolysis of ATP coupled to the transport of aminophospholipids, phosphatidylserines (PS) and phosphatidylethanolamines (PE), from the outer to the inner leaflet of the plasma membrane. Major PS-flippase in immune cell subsets. In erythrocyte plasma membrane, it is required to maintain PS in the inner leaflet preventing its exposure on the surface. This asymmetric distribution is critical for the survival of erythrocytes in circulation since externalized PS is a phagocytic signal for erythrocyte clearance by splenic macrophages. Required for B cell differentiation past the pro-B cell stage. Seems to mediate PS flipping in pro-B cells. May be involved in the transport of cholestatic bile acids. This chain is Phospholipid-transporting ATPase IG, found in Homo sapiens (Human).